The primary structure comprises 434 residues: Isocitrate lyase (434 aa).

Residue 91–93 coordinates substrate; sequence SGW. D157 contributes to the Mg(2+) binding site. The active-site Proton acceptor is C195. Residues 196 to 197, R232, 317 to 321, and T351 each bind substrate; these read GH and NCSPS.

This sequence belongs to the isocitrate lyase/PEP mutase superfamily. Isocitrate lyase family. In terms of assembly, homotetramer. Mg(2+) serves as cofactor.

The enzyme catalyses D-threo-isocitrate = glyoxylate + succinate. It functions in the pathway carbohydrate metabolism; glyoxylate cycle; (S)-malate from isocitrate: step 1/2. In terms of biological role, involved in the metabolic adaptation in response to environmental changes. Catalyzes the reversible formation of succinate and glyoxylate from isocitrate, a key step of the glyoxylate cycle, which operates as an anaplerotic route for replenishing the tricarboxylic acid cycle during growth on fatty acid substrates. This is Isocitrate lyase (aceA) from Escherichia coli O6:H1 (strain CFT073 / ATCC 700928 / UPEC).